The primary structure comprises 117 residues: MNAVPIILVFAAGLNSCIGNILLKWGRASLPPSAGLADTFLTPGFVGGVVFYGINVLLFAKALDSLEVSVAYPILAGSGFAMLIIASHYFFGEPFHLHKWIGVALVLVGIIFLARGG.

The next 4 membrane-spanning stretches (helical) occupy residues 3–23 (AVPI…NILL), 40–60 (FLTP…LLFA), 66–86 (LEVS…LIIA), and 94–114 (PFHL…IFLA).

This sequence to E.coli and S.aureus ethidium bromide resistance proteins (ebr/QacC/EmrE/MvrC).

The protein resides in the cell membrane. This is an uncharacterized protein from Sinorhizobium fredii (strain NBRC 101917 / NGR234).